The following is a 132-amino-acid chain: Lectin OAA (132 aa).

2 consecutive repeat copies span residues 1 to 66 (ALYN…TLLG) and 67 to 132 (NNSY…GTTL). Positions 1 to 132 (ALYNVENQWG…GPIGFKGTTL (132 aa)) are 2 X approximate tandem repeats.

As to quaternary structure, monomer.

Lectin specific for high mannose N-glycans, recognizes the branched moiety of these glycans. Does not recognize other types of N-glycans or monosaccharides. Agglutinates trypsin-treated rabbit erythrocytes. Does not require divalent cations for activity. Inhibits HIV replication in MT4 cells with an EC(50) of 45 nM. Binds to the HIV envelope glycoprotein gp120. In Planktothrix agardhii (Oscillatoria agardhii), this protein is Lectin OAA.